Reading from the N-terminus, the 285-residue chain is Pseudouridine-5'-phosphate glycosidase (285 aa).

The Proton donor role is filled by Glu17. Residues Lys77 and Val97 each coordinate substrate. Asp126 contacts Mn(2+). 128 to 130 (SQD) is a binding site for substrate. Lys147 serves as the catalytic Nucleophile.

Belongs to the pseudouridine-5'-phosphate glycosidase family. Homotrimer. It depends on Mn(2+) as a cofactor.

The catalysed reaction is D-ribose 5-phosphate + uracil = psi-UMP + H2O. Catalyzes the reversible cleavage of pseudouridine 5'-phosphate (PsiMP) to ribose 5-phosphate and uracil. Functions biologically in the cleavage direction, as part of a pseudouridine degradation pathway. The protein is Pseudouridine-5'-phosphate glycosidase of Thermotoga maritima (strain ATCC 43589 / DSM 3109 / JCM 10099 / NBRC 100826 / MSB8).